A 480-amino-acid polypeptide reads, in one-letter code: Adenosylhomocysteinase (480 aa).

Residues threonine 63, aspartate 142, and glutamate 203 each coordinate substrate. 204–206 (TTT) lines the NAD(+) pocket. Lysine 233 and aspartate 237 together coordinate substrate. Residues asparagine 238, 267–272 (GYGDVG), glutamate 290, asparagine 325, 346–348 (IGH), and asparagine 394 contribute to the NAD(+) site.

This sequence belongs to the adenosylhomocysteinase family. NAD(+) is required as a cofactor.

Its subcellular location is the cytoplasm. The catalysed reaction is S-adenosyl-L-homocysteine + H2O = L-homocysteine + adenosine. It participates in amino-acid biosynthesis; L-homocysteine biosynthesis; L-homocysteine from S-adenosyl-L-homocysteine: step 1/1. Its function is as follows. May play a key role in the regulation of the intracellular concentration of adenosylhomocysteine. The chain is Adenosylhomocysteinase from Xanthomonas oryzae pv. oryzae (strain PXO99A).